The following is a 308-amino-acid chain: MIRHFLRDDDLSPTEQAEVLQLAAELKREPFSRRPLDGPRGVAVIFDKNSTRTRFSFEMGIAQLGGHAVVVDGRSTQLGREETLPDTAKVLSRFVDAIVWRTFGQDRLQAMASTATVPVVNALSDEFHPCQVLADLQTITERRGSLKGLRLSYFGDGANNMAHSLMLGGVTAGMHVTIAAPDGFHPDPSVVGAAEQRAETTGASVRLTADAHVAAAGADVLVTDTWTSMGQEDDGLDRVKPFRPFQVNEQLLAAADSEVVVLHCLPAHRGDEITDQVMDGPASAVWDEAENRLHAQKALLVWLLERGR.

Residues 50-53 (STRT), glutamine 77, arginine 101, and 128-131 (HPCQ) each bind carbamoyl phosphate. L-ornithine contacts are provided by residues asparagine 160, aspartate 224, and 228–229 (SM). Carbamoyl phosphate is bound by residues 264–265 (CL) and arginine 292.

It belongs to the aspartate/ornithine carbamoyltransferase superfamily. OTCase family.

It localises to the cytoplasm. The enzyme catalyses carbamoyl phosphate + L-ornithine = L-citrulline + phosphate + H(+). The protein operates within amino-acid biosynthesis; L-arginine biosynthesis; L-arginine from L-ornithine and carbamoyl phosphate: step 1/3. Functionally, reversibly catalyzes the transfer of the carbamoyl group from carbamoyl phosphate (CP) to the N(epsilon) atom of ornithine (ORN) to produce L-citrulline. The chain is Ornithine carbamoyltransferase from Mycobacterium ulcerans (strain Agy99).